Consider the following 160-residue polypeptide: 6,7-dimethyl-8-ribityllumazine synthase (160 aa).

5-amino-6-(D-ribitylamino)uracil-binding positions include Trp27, 59 to 61 (AIE), and 81 to 83 (VVI). A (2S)-2-hydroxy-3-oxobutyl phosphate-binding site is contributed by 86 to 87 (QT). His89 serves as the catalytic Proton donor. Asn114 provides a ligand contact to 5-amino-6-(D-ribitylamino)uracil. Residue Arg128 participates in (2S)-2-hydroxy-3-oxobutyl phosphate binding.

This sequence belongs to the DMRL synthase family. As to quaternary structure, homopentamer.

The enzyme catalyses (2S)-2-hydroxy-3-oxobutyl phosphate + 5-amino-6-(D-ribitylamino)uracil = 6,7-dimethyl-8-(1-D-ribityl)lumazine + phosphate + 2 H2O + H(+). It participates in cofactor biosynthesis; riboflavin biosynthesis; riboflavin from 2-hydroxy-3-oxobutyl phosphate and 5-amino-6-(D-ribitylamino)uracil: step 1/2. Its function is as follows. Catalyzes the formation of 6,7-dimethyl-8-ribityllumazine by condensation of 5-amino-6-(D-ribitylamino)uracil with 3,4-dihydroxy-2-butanone 4-phosphate. This is the penultimate step in the biosynthesis of riboflavin. The polypeptide is 6,7-dimethyl-8-ribityllumazine synthase (Mycobacterium sp. (strain JLS)).